The following is a 198-amino-acid chain: Density-regulated protein (198 aa).

The tract at residues 76 to 110 (QETGTVEGQATSGEEEEKKKQKRGGRGQIKQKKKT) is disordered. The span at 77–87 (ETGTVEGQATS) shows a compositional bias: polar residues. Residues 95 to 110 (KQKRGGRGQIKQKKKT) are compositionally biased toward basic residues. The 68-residue stretch at 115 to 182 (ITIAKIPRAK…DIIDVIQEKW (68 aa)) folds into the SUI1 domain.

This sequence belongs to the DENR family.

Functionally, may be involved in the translation of target mRNAs by scanning and recognition of the initiation codon. Involved in translation initiation; promotes recruitment of aminoacetyled initiator tRNA to P site of 40S ribosomes. Can promote release of deacylated tRNA and mRNA from recycled 40S subunits following ABCE1-mediated dissociation of post-termination ribosomal complexes into subunits. In Xenopus laevis (African clawed frog), this protein is Density-regulated protein (denr).